The chain runs to 455 residues: Probable glycine dehydrogenase (decarboxylating) subunit 1 (455 aa).

This sequence belongs to the GcvP family. N-terminal subunit subfamily. In terms of assembly, the glycine cleavage system is composed of four proteins: P, T, L and H. In this organism, the P 'protein' is a heterodimer of two subunits.

It catalyses the reaction N(6)-[(R)-lipoyl]-L-lysyl-[glycine-cleavage complex H protein] + glycine + H(+) = N(6)-[(R)-S(8)-aminomethyldihydrolipoyl]-L-lysyl-[glycine-cleavage complex H protein] + CO2. In terms of biological role, the glycine cleavage system catalyzes the degradation of glycine. The P protein binds the alpha-amino group of glycine through its pyridoxal phosphate cofactor; CO(2) is released and the remaining methylamine moiety is then transferred to the lipoamide cofactor of the H protein. This is Probable glycine dehydrogenase (decarboxylating) subunit 1 from Saccharolobus islandicus (strain M.16.27) (Sulfolobus islandicus).